A 669-amino-acid chain; its full sequence is Probable potassium transport system protein Kup (669 aa).

A run of 12 helical transmembrane segments spans residues 47-67 (VLML…TSPL), 86-106 (VIGI…IKYM), 144-164 (TIIG…TPAI), 172-192 (GLTL…IFVM), 206-226 (IGVI…LLGI), 252-272 (GMAG…GEAL), 288-308 (WFFV…ALLL), 326-346 (ALLP…QALI), 378-398 (IYIP…VLTF), 404-424 (LAAA…ILAF), 435-455 (LLKS…FFGA), and 460-480 (IPHG…LMTT).

It belongs to the HAK/KUP transporter (TC 2.A.72) family.

The protein resides in the cell inner membrane. The enzyme catalyses K(+)(in) + H(+)(in) = K(+)(out) + H(+)(out). Its function is as follows. Transport of potassium into the cell. Likely operates as a K(+):H(+) symporter. The sequence is that of Probable potassium transport system protein Kup from Bdellovibrio bacteriovorus (strain ATCC 15356 / DSM 50701 / NCIMB 9529 / HD100).